The following is a 206-amino-acid chain: MGRFRGSITKLSRREGINLAETEKVQKYLDKRPYAPGQHGQRRGRGRPSDYSVRLREKQKLARLYGMGEKQFRNLFEEAASVPGVTGTVFLQLLERRLDNVVFRMGFASTRRQARQFVGHGHILVNGKKVDIPSYRVKIGDEISVFEGSRQMGFVQENMEAQKRRRVSPWVELDVENFKGTFSRLPAREDLALPINENFIIEYYSR.

Residues Leu29–Ser52 form a disordered region. The region spanning Arg96–Val171 is the S4 RNA-binding domain.

Belongs to the universal ribosomal protein uS4 family. In terms of assembly, part of the 30S ribosomal subunit. Contacts protein S5. The interaction surface between S4 and S5 is involved in control of translational fidelity.

One of the primary rRNA binding proteins, it binds directly to 16S rRNA where it nucleates assembly of the body of the 30S subunit. Its function is as follows. With S5 and S12 plays an important role in translational accuracy. The protein is Small ribosomal subunit protein uS4 of Deinococcus deserti (strain DSM 17065 / CIP 109153 / LMG 22923 / VCD115).